The sequence spans 428 residues: Adenylosuccinate synthetase (428 aa).

GTP is bound by residues 12-18 and 40-42; these read GDEGKGK and GHT. D13 (proton acceptor) is an active-site residue. The Mg(2+) site is built by D13 and G40. IMP contacts are provided by residues 13 to 16, 38 to 41, T128, R142, Q223, T238, and R302; these read DEGK and NAGH. The Proton donor role is filled by H41. 298-304 contributes to the substrate binding site; it reads TTTGRPR. Residues R304, 330–332, and 412–414 contribute to the GTP site; these read SID and SVG.

This sequence belongs to the adenylosuccinate synthetase family. As to quaternary structure, homodimer. It depends on Mg(2+) as a cofactor.

It localises to the cytoplasm. It catalyses the reaction IMP + L-aspartate + GTP = N(6)-(1,2-dicarboxyethyl)-AMP + GDP + phosphate + 2 H(+). It functions in the pathway purine metabolism; AMP biosynthesis via de novo pathway; AMP from IMP: step 1/2. Its function is as follows. Plays an important role in the de novo pathway of purine nucleotide biosynthesis. Catalyzes the first committed step in the biosynthesis of AMP from IMP. This is Adenylosuccinate synthetase from Streptococcus pneumoniae serotype 2 (strain D39 / NCTC 7466).